A 304-amino-acid chain; its full sequence is UDP-N-acetylenolpyruvoylglucosamine reductase (304 aa).

One can recognise an FAD-binding PCMH-type domain in the interval 34 to 198; the sequence is IGGKADFLVW…LEVVFALQPG (165 aa). Arg177 is a catalytic residue. Catalysis depends on Ser227, which acts as the Proton donor. Glu297 is a catalytic residue.

It belongs to the MurB family. FAD is required as a cofactor.

It localises to the cytoplasm. It carries out the reaction UDP-N-acetyl-alpha-D-muramate + NADP(+) = UDP-N-acetyl-3-O-(1-carboxyvinyl)-alpha-D-glucosamine + NADPH + H(+). Its pathway is cell wall biogenesis; peptidoglycan biosynthesis. In terms of biological role, cell wall formation. The chain is UDP-N-acetylenolpyruvoylglucosamine reductase from Geobacillus thermodenitrificans (strain NG80-2).